Consider the following 478-residue polypeptide: Cytochrome c-552 (478 aa).

Positions 1–26 (MTRIKINARRIFSLLIPFFFFTSVHA) are cleaved as a signal peptide. H94 is a binding site for heme c. Residues C122, C125, and K126 each coordinate heme. Heme c contacts are provided by C160, C163, H164, C209, C212, and H213. E215, Y216, K261, and Q263 together coordinate Ca(2+). Y216 is a substrate binding site. H264 is a binding site for substrate. Positions 275, 282, 285, 286, 301, 314, 317, 318, and 393 each coordinate heme c.

It belongs to the cytochrome c-552 family. Requires Ca(2+) as cofactor. Heme c serves as cofactor.

Its subcellular location is the periplasm. The enzyme catalyses 6 Fe(III)-[cytochrome c] + NH4(+) + 2 H2O = 6 Fe(II)-[cytochrome c] + nitrite + 8 H(+). It participates in nitrogen metabolism; nitrate reduction (assimilation). Its function is as follows. Catalyzes the reduction of nitrite to ammonia, consuming six electrons in the process. This Shigella flexneri protein is Cytochrome c-552.